We begin with the raw amino-acid sequence, 342 residues long: tRNA N6-adenosine threonylcarbamoyltransferase (342 aa).

Positions 111 and 115 each coordinate Fe cation. Substrate-binding positions include 134–138, aspartate 167, glycine 180, aspartate 184, and asparagine 273; that span reads LVSGG. Residue aspartate 298 participates in Fe cation binding.

Belongs to the KAE1 / TsaD family. It depends on Fe(2+) as a cofactor.

It is found in the cytoplasm. The enzyme catalyses L-threonylcarbamoyladenylate + adenosine(37) in tRNA = N(6)-L-threonylcarbamoyladenosine(37) in tRNA + AMP + H(+). In terms of biological role, required for the formation of a threonylcarbamoyl group on adenosine at position 37 (t(6)A37) in tRNAs that read codons beginning with adenine. Is involved in the transfer of the threonylcarbamoyl moiety of threonylcarbamoyl-AMP (TC-AMP) to the N6 group of A37, together with TsaE and TsaB. TsaD likely plays a direct catalytic role in this reaction. The chain is tRNA N6-adenosine threonylcarbamoyltransferase from Gloeobacter violaceus (strain ATCC 29082 / PCC 7421).